The chain runs to 317 residues: L-lactate dehydrogenase (317 aa).

Residues Val-17, Asp-38, Lys-43, Tyr-69, and 83-84 (GA) contribute to the NAD(+) site. Gln-86 and Arg-92 together coordinate substrate. NAD(+) is bound by residues Ser-105, 122–124 (ATN), and Ser-147. Substrate is bound at residue 124–127 (NPVD). 152-155 (DTAR) contacts substrate. The beta-D-fructose 1,6-bisphosphate site is built by Arg-157 and His-172. The active-site Proton acceptor is His-179. Tyr-224 is modified (phosphotyrosine). Thr-233 is a binding site for substrate.

Belongs to the LDH/MDH superfamily. LDH family. In terms of assembly, homotetramer.

It is found in the cytoplasm. It carries out the reaction (S)-lactate + NAD(+) = pyruvate + NADH + H(+). It functions in the pathway fermentation; pyruvate fermentation to lactate; (S)-lactate from pyruvate: step 1/1. Allosterically activated by fructose 1,6-bisphosphate (FBP). In terms of biological role, catalyzes the conversion of lactate to pyruvate. This is L-lactate dehydrogenase from Bacillus caldotenax.